The sequence spans 185 residues: Transcriptional repressor NrdR (185 aa).

The segment at 1 to 24 (MRCPFCGGPDTQVKDSRPSEDSSA) is disordered. A zinc finger lies at 3-34 (CPFCGGPDTQVKDSRPSEDSSAIRRRRVCPDC). Positions 12-24 (QVKDSRPSEDSSA) are enriched in basic and acidic residues. Positions 49–139 (LVVLKRSGKR…VYKNFREAQD (91 aa)) constitute an ATP-cone domain. A disordered region spans residues 149–185 (ERLEGEGDLPEDGEAAPAPPDEVVAAPRRGRPARKRA). Over residues 176–185 (RRGRPARKRA) the composition is skewed to basic residues.

Belongs to the NrdR family. The cofactor is Zn(2+).

Its function is as follows. Negatively regulates transcription of bacterial ribonucleotide reductase nrd genes and operons by binding to NrdR-boxes. In Methylorubrum extorquens (strain PA1) (Methylobacterium extorquens), this protein is Transcriptional repressor NrdR.